Consider the following 246-residue polypeptide: Complement C1q subcomponent subunit C (246 aa).

The N-terminal stretch at 1–29 is a signal peptide; that stretch reads MVVGPSCQPPCGLCLLLLFLLALPLRSQA. The Collagen-like domain maps to 32–113; sequence GCYGIPGMPG…GPPGEPGVEG (82 aa). P37, P40, P43, P46, and P64 each carry 4-hydroxyproline. Residues 44–116 form a disordered region; that stretch reads GAPGKDGHDG…GEPGVEGRYK (73 aa). Position 76 is a 5-hydroxylysine (K76). O-linked (Gal...) hydroxylysine glycosylation is present at K76. Residues P82, P97, P100, and P106 each carry the 4-hydroxyproline modification. Over residues 99 to 108 the composition is skewed to pro residues; the sequence is DPGPRGPPGE. Residues 116 to 246 enclose the C1q domain; it reads KQKHQSVFTV…VFSGFLLFPD (131 aa). C180 and C194 are joined by a disulfide.

As to quaternary structure, core component of the complement C1 complex, a calcium-dependent complex composed of 1 molecule of the C1Q subcomplex, 2 molecules of C1R and 2 molecules of C1S. The C1Q subcomplex is composed 18 subunits: 3 chains of C1QA, C1QB, and C1QC trimerize to form 6 collagen-like triple helices connected to six globular ligand-recognition modules (C1q domain). O-linked glycans consist of Glc-Gal disaccharides bound to the oxygen atom of post-translationally added hydroxyl groups.

It localises to the secreted. Its subcellular location is the cell surface. Its activity is regulated as follows. The C1Q subcomplex is inhibited by sulfated molecules, such as triterpenoid sulfates, heparan sulfate, or chondroitin sulfates. Functionally, core component of the complement C1 complex, a multiprotein complex that initiates the classical pathway of the complement system, a cascade of proteins that leads to phagocytosis and breakdown of pathogens and signaling that strengthens the adaptive immune system. The classical complement pathway is initiated by the C1Q subcomplex of the C1 complex, which specifically binds IgG or IgM immunoglobulins complexed with antigens, forming antigen-antibody complexes on the surface of pathogens: C1QA, together with C1QB and C1QC, specifically recognizes and binds the Fc regions of IgG or IgM via its C1q domain. Immunoglobulin-binding activates the proenzyme C1R, which cleaves C1S, initiating the proteolytic cascade of the complement system. The C1Q subcomplex is activated by a hexamer of IgG complexed with antigens, while it is activated by a pentameric IgM. The C1Q subcomplex also recognizes and binds phosphatidylserine exposed on the surface of cells undergoing programmed cell death, possibly promoting activation of the complement system. This is Complement C1q subcomponent subunit C from Mus musculus (Mouse).